A 59-amino-acid chain; its full sequence is Large ribosomal subunit protein uL30 (59 aa).

Belongs to the universal ribosomal protein uL30 family. Part of the 50S ribosomal subunit.

This Enterobacter sp. (strain 638) protein is Large ribosomal subunit protein uL30.